Here is a 215-residue protein sequence, read N- to C-terminus: uncharacterized protein (215 aa).

This is an uncharacterized protein from Acanthamoeba polyphaga (Amoeba).